A 164-amino-acid polypeptide reads, in one-letter code: Putative ankyrin repeat protein RBE_0585 (164 aa).

ANK repeat units lie at residues Asn42–Leu107 and Asp126–Tyr149.

In Rickettsia bellii (strain RML369-C), this protein is Putative ankyrin repeat protein RBE_0585.